The following is a 208-amino-acid chain: GATA transcription factor 20 (208 aa).

A GATA-type zinc finger spans residues 94–119 (CASCDTTSTPLWRNGPKGPKSLCNAC).

Belongs to the type IV zinc-finger family. Class B subfamily.

The protein resides in the nucleus. Its function is as follows. Transcriptional regulator that specifically binds 5'-GATA-3' or 5'-GAT-3' motifs within gene promoters. In Arabidopsis thaliana (Mouse-ear cress), this protein is GATA transcription factor 20.